The primary structure comprises 65 residues: DNA gyrase inhibitor YacG (65 aa).

Cys8, Cys11, Cys27, and Cys31 together coordinate Zn(2+). A disordered region spans residues 43–65 (SYRIPDTGKDSEKQENDPSGSEK). Residues 48-65 (DTGKDSEKQENDPSGSEK) show a composition bias toward basic and acidic residues.

This sequence belongs to the DNA gyrase inhibitor YacG family. As to quaternary structure, interacts with GyrB. The cofactor is Zn(2+).

In terms of biological role, inhibits all the catalytic activities of DNA gyrase by preventing its interaction with DNA. Acts by binding directly to the C-terminal domain of GyrB, which probably disrupts DNA binding by the gyrase. The polypeptide is DNA gyrase inhibitor YacG (Nitrosospira multiformis (strain ATCC 25196 / NCIMB 11849 / C 71)).